We begin with the raw amino-acid sequence, 916 residues long: Ubiquitin carboxyl-terminal hydrolase 20 (916 aa).

The UBP-type zinc finger occupies 6–111 (DLCPHLDCIG…SSSARLSEQD (106 aa)). Residues Cys-8, His-10, Cys-30, Cys-33, Cys-43, Cys-48, Cys-53, His-60, His-64, His-70, Cys-83, and Cys-86 each coordinate Zn(2+). Ser-112, Ser-132, and Ser-134 each carry phosphoserine. The 543-residue stretch at 145 to 687 (TGMKNLGNSC…EAYVLFYRKS (543 aa)) folds into the USP domain. Cys-154 functions as the Nucleophile in the catalytic mechanism. Residues 258 to 420 (LTDARDSDSS…PPRASPVRMG (163 aa)) are disordered. Thr-259 carries the phosphothreonine modification. Residues 260-280 (DARDSDSSDTDERRDGDRSPS) are compositionally biased toward basic and acidic residues. Ser-306 is subject to Phosphoserine. Residues 317–333 (EAGRAISEKERMKDRKF) show a composition bias toward basic and acidic residues. Ser-369 bears the Phosphoserine mark. Thr-378 carries the phosphothreonine modification. Phosphoserine is present on residues Ser-410 and Ser-415. Residue His-645 is the Proton acceptor of the active site. 2 DUSP domains span residues 689–782 (EEAM…LYVC) and 791–894 (ALAK…RQSV).

The protein belongs to the peptidase C19 family. USP20/USP33 subfamily. In terms of assembly, interacts with VHL, leading to its ubiquitination and subsequent degradation. Interacts with CCP110. Interacts with DIO2. Interacts with HIF1A. Interacts with ADRB2. Interacts with USP18. In terms of processing, ubiquitinated via a VHL-dependent pathway for proteasomal degradation.

The protein localises to the cytoplasm. It localises to the endoplasmic reticulum. It is found in the perinuclear region. Its subcellular location is the cytoskeleton. The protein resides in the microtubule organizing center. The protein localises to the centrosome. It carries out the reaction Thiol-dependent hydrolysis of ester, thioester, amide, peptide and isopeptide bonds formed by the C-terminal Gly of ubiquitin (a 76-residue protein attached to proteins as an intracellular targeting signal).. Deubiquitinating enzyme that plays a role in many cellular processes including autophagy, cellular antiviral response or membrane protein biogenesis. Attenuates TLR4-mediated NF-kappa-B signaling by cooperating with beta-arrestin-2/ARRB2 and inhibiting TRAF6 autoubiquitination. Promotes cellular antiviral responses by deconjugating 'Lys-33' and 'Lys-48'-linked ubiquitination of STING1 leading to its stabilization. Plays an essential role in autophagy induction by regulating the ULK1 stability through deubiquitination of ULK1. Acts as a positive regulator for NF-kappa-B activation by TNF-alpha through deubiquitinating 'Lys-48'-linked polyubiquitination of SQSTM1, leading to its increased stability. Acts as a regulator of G-protein coupled receptor (GPCR) signaling by mediating the deubiquitination beta-2 adrenergic receptor (ADRB2). Plays a central role in ADRB2 recycling and resensitization after prolonged agonist stimulation by constitutively binding ADRB2, mediating deubiquitination of ADRB2 and inhibiting lysosomal trafficking of ADRB2. Upon dissociation, it is probably transferred to the translocated beta-arrestins, possibly leading to beta-arrestins deubiquitination and disengagement from ADRB2. This suggests the existence of a dynamic exchange between the ADRB2 and beta-arrestins. Deubiquitinates DIO2, thereby regulating thyroid hormone regulation. Deubiquitinates HIF1A, leading to stabilize HIF1A and enhance HIF1A-mediated activity. Deubiquitinates MCL1, a pivotal member of the anti-apoptotic Bcl-2 protein family to regulate its stability. Within the endoplasmic reticulum, participates with USP33 in the rescue of post-translationally targeted membrane proteins that are inappropriately ubiquitinated by the cytosolic protein quality control in the cytosol. The sequence is that of Ubiquitin carboxyl-terminal hydrolase 20 (Usp20) from Mus musculus (Mouse).